An 85-amino-acid chain; its full sequence is Small ribosomal subunit protein bS18 (85 aa).

This sequence belongs to the bacterial ribosomal protein bS18 family. Part of the 30S ribosomal subunit. Forms a tight heterodimer with protein bS6.

In terms of biological role, binds as a heterodimer with protein bS6 to the central domain of the 16S rRNA, where it helps stabilize the platform of the 30S subunit. This is Small ribosomal subunit protein bS18 from Hamiltonella defensa subsp. Acyrthosiphon pisum (strain 5AT).